The chain runs to 1379 residues: Protein three rows (1379 aa).

The segment at 1031 to 1037 (VEPIRKQ) is separase cleavage-site. 3 disordered regions span residues 1206-1231 (PEDK…KQSA), 1248-1309 (PSAT…ATSK), and 1328-1379 (ITTS…RHRH). A compositionally biased stretch (polar residues) spans 1213-1228 (ATGSVSAVKNTASKVK). Residues 1248 to 1267 (PSATSCSSSGGSGTENTPPS) show a composition bias toward low complexity.

As to quaternary structure, interacts with pim and Sse. Cleavage of thr contributes to inactivation of Sse. Proteolytically cleaved after the metaphase-to-anaphase transition, C-terminal cleavage product is degraded. Cleavage can only proceed within complexes that contain active Sse. In terms of tissue distribution, during embryogenesis, expressed in Malpighian tubule buds, and epithelia of foregut and hindgut.

The protein resides in the cytoplasm. Its function is as follows. Required specifically for chromosome disjunction during all mitoses; maternally provided protein is sufficient until mitosis 14 then zygotic protein is required. Involved in formation and/or maintenance of epithelial structures: bud extension during Malpighian tubule development, and foregut and hindgut morphogenesis. The polypeptide is Protein three rows (thr) (Drosophila melanogaster (Fruit fly)).